Consider the following 191-residue polypeptide: Large ribosomal subunit protein uL6B (191 aa).

The protein belongs to the universal ribosomal protein uL6 family. As to quaternary structure, component of the large ribosomal subunit (LSU). Mature yeast ribosomes consist of a small (40S) and a large (60S) subunit. The 40S small subunit contains 1 molecule of ribosomal RNA (18S rRNA) and 33 different proteins (encoded by 57 genes). The large 60S subunit contains 3 rRNA molecules (25S, 5.8S and 5S rRNA) and 46 different proteins (encoded by 81 genes).

The protein resides in the cytoplasm. Its function is as follows. Component of the ribosome, a large ribonucleoprotein complex responsible for the synthesis of proteins in the cell. The small ribosomal subunit (SSU) binds messenger RNAs (mRNAs) and translates the encoded message by selecting cognate aminoacyl-transfer RNA (tRNA) molecules. The large subunit (LSU) contains the ribosomal catalytic site termed the peptidyl transferase center (PTC), which catalyzes the formation of peptide bonds, thereby polymerizing the amino acids delivered by tRNAs into a polypeptide chain. The nascent polypeptides leave the ribosome through a tunnel in the LSU and interact with protein factors that function in enzymatic processing, targeting, and the membrane insertion of nascent chains at the exit of the ribosomal tunnel. The sequence is that of Large ribosomal subunit protein uL6B from Saccharomyces cerevisiae (strain ATCC 204508 / S288c) (Baker's yeast).